The following is a 141-amino-acid chain: Succinate dehydrogenase [ubiquinone] cytochrome b small subunit 2 (141 aa).

The transit peptide at 1-24 directs the protein to the mitochondrion; it reads MSLIRCTTSKALKFRQLLKMAART. Residues 25-44 are Mitochondrial matrix-facing; the sequence is SVTTPVSREPFSIEDHSLHF. The chain crosses the membrane as a helical span at residues 45-63; it reads KIERYWAAGMIPLIPTAYF. Topologically, residues 64-68 are mitochondrial intermembrane; that stretch reads IHTPA. Residues 69–89 traverse the membrane as a helical segment; it reads MDAVLTVAIVLHVHWGIAGVV. His80 is a binding site for heme b. At 90-104 the chain is on the mitochondrial matrix side; the sequence is SDYARPFVIGDTLAR. Residue Tyr92 participates in a ubiquinone binding. Residues 105–126 form a helical membrane-spanning segment; the sequence is VARASVYIITVILLASLLHFNN. Residues 127–141 lie on the Mitochondrial intermembrane side of the membrane; that stretch reads SDVGLTKAFEMVWSL.

This sequence belongs to the CybS family. Component of the mitochondrial electron transport chain complex II composed of four subunits: a flavoprotein (Fp), an iron-sulfur protein (Ip), and a large cytochrome b (CybL) subunit and a small cytochrome b (CybS) subunit. There are 2 developmental stage-specific forms of complex II which have the Ip and CybL subunits in common. Complex II from the free-living larvae (aerobic environment) acts as a succinate dehydrogenase and is composed of the common subunit Ip and CybL and the stage specific subunits FpL and CybSL. Complex II from parasitic larvae and adults (anaerobic environment) acts as a fumarate reductase and is composed of the common subunit Ip and CybL and the stage specific subunits FpA and CybSA. Heme b serves as cofactor.

Its subcellular location is the mitochondrion inner membrane. The protein operates within carbohydrate metabolism; tricarboxylic acid cycle; fumarate from succinate (eukaryal route): step 1/1. Its function is as follows. Membrane-bound small subunit (CybS) of the mitochondrial electron transport chain complex II, which together with the membrane-bound large subunit (CybL), anchor the catalytic subunits to the inner mitochondria membrane. During the free-living egg-larvae stages, which occur in an aerobic environment, complex II acts as a succinate dehydrogenase by transferring electrons from succinate to ubiquinone. The sequence is that of Succinate dehydrogenase [ubiquinone] cytochrome b small subunit 2 from Ascaris suum (Pig roundworm).